Here is a 136-residue protein sequence, read N- to C-terminus: Large-conductance mechanosensitive channel (136 aa).

The next 2 membrane-spanning stretches (helical) occupy residues 9-29 and 78-98; these read AFAVKGNVVDMAVGIIIGAAF and FIQTVIDFLIIAFAIFIGVKA.

It belongs to the MscL family. Homopentamer.

Its subcellular location is the cell inner membrane. Its function is as follows. Channel that opens in response to stretch forces in the membrane lipid bilayer. May participate in the regulation of osmotic pressure changes within the cell. The chain is Large-conductance mechanosensitive channel from Azotobacter vinelandii (strain DJ / ATCC BAA-1303).